We begin with the raw amino-acid sequence, 57 residues long: uncharacterized protein (57 aa).

The interval Gln-34–Phe-57 is disordered.

This is an uncharacterized protein from Saccharomyces cerevisiae (strain ATCC 204508 / S288c) (Baker's yeast).